The chain runs to 300 residues: Estradiol 17-beta-dehydrogenase 11 (300 aa).

An N-terminal signal peptide occupies residues Met1 to Leu19. Leu40–Val64 contributes to the NADP(+) binding site. Position 172 (Ser172) interacts with substrate. Catalysis depends on Tyr185, which acts as the Proton acceptor.

The protein belongs to the short-chain dehydrogenases/reductases (SDR) family. 17-beta-HSD 3 subfamily. As to expression, present at high level in steroidogenic cells such as syncytiotrophoblasts, sebaceous gland, Leydig cells, and granulosa cells of the dominant follicle and corpus luteum. In lung, it is detected in the ciliated epithelium and in acini of adult trachea, in bronchioles, but not in alveoli. In the eye, it is detected in the nonpigmented epithelium of the ciliary body and, at lower level, in the inner nuclear layer of the retina (at protein level). Widely expressed. Highly expressed in retina, pancreas, kidney, liver, lung, adrenal, small intestine, ovary and heart.

The protein localises to the endoplasmic reticulum. The protein resides in the lipid droplet. The catalysed reaction is 17beta-estradiol + NAD(+) = estrone + NADH + H(+). It catalyses the reaction 17beta-estradiol + NADP(+) = estrone + NADPH + H(+). Functionally, can convert androstan-3-alpha,17-beta-diol (3-alpha-diol) to androsterone in vitro, suggesting that it may participate in androgen metabolism during steroidogenesis. May act by metabolizing compounds that stimulate steroid synthesis and/or by generating metabolites that inhibit it. Has no activity toward DHEA (dehydroepiandrosterone), or A-dione (4-androste-3,17-dione), and only a slight activity toward testosterone to A-dione. Tumor-associated antigen in cutaneous T-cell lymphoma. The polypeptide is Estradiol 17-beta-dehydrogenase 11 (HSD17B11) (Homo sapiens (Human)).